A 296-amino-acid polypeptide reads, in one-letter code: Nucleotide-binding protein SEQ_0857 (296 aa).

ATP is bound at residue 13–20; sequence GMSGAGKT. 63-66 serves as a coordination point for GTP; the sequence is DMRS.

This sequence belongs to the RapZ-like family.

Its function is as follows. Displays ATPase and GTPase activities. This is Nucleotide-binding protein SEQ_0857 from Streptococcus equi subsp. equi (strain 4047).